Reading from the N-terminus, the 385-residue chain is Phosphate acyltransferase (385 aa).

The span at 1 to 17 (MAAGTSIGTTPGGSTSP) shows a compositional bias: low complexity. A disordered region spans residues 1–28 (MAAGTSIGTTPGGSTSPETPPEHGLTGT).

It belongs to the PlsX family. As to quaternary structure, homodimer. Probably interacts with PlsY.

Its subcellular location is the cytoplasm. It carries out the reaction a fatty acyl-[ACP] + phosphate = an acyl phosphate + holo-[ACP]. It functions in the pathway lipid metabolism; phospholipid metabolism. In terms of biological role, catalyzes the reversible formation of acyl-phosphate (acyl-PO(4)) from acyl-[acyl-carrier-protein] (acyl-ACP). This enzyme utilizes acyl-ACP as fatty acyl donor, but not acyl-CoA. This is Phosphate acyltransferase from Dinoroseobacter shibae (strain DSM 16493 / NCIMB 14021 / DFL 12).